The chain runs to 256 residues: DNA repair protein RecO (256 aa).

This sequence belongs to the RecO family.

Its function is as follows. Involved in DNA repair and RecF pathway recombination. This Pelotomaculum thermopropionicum (strain DSM 13744 / JCM 10971 / SI) protein is DNA repair protein RecO.